Reading from the N-terminus, the 257-residue chain is Ribosomal RNA small subunit methyltransferase A (257 aa).

The S-adenosyl-L-methionine site is built by His12, Leu14, Gly39, Glu60, Asp83, and Asn101.

Belongs to the class I-like SAM-binding methyltransferase superfamily. rRNA adenine N(6)-methyltransferase family. RsmA subfamily.

The protein resides in the cytoplasm. The enzyme catalyses adenosine(1518)/adenosine(1519) in 16S rRNA + 4 S-adenosyl-L-methionine = N(6)-dimethyladenosine(1518)/N(6)-dimethyladenosine(1519) in 16S rRNA + 4 S-adenosyl-L-homocysteine + 4 H(+). Its function is as follows. Specifically dimethylates two adjacent adenosines (A1518 and A1519) in the loop of a conserved hairpin near the 3'-end of 16S rRNA in the 30S particle. May play a critical role in biogenesis of 30S subunits. In Nitrosomonas europaea (strain ATCC 19718 / CIP 103999 / KCTC 2705 / NBRC 14298), this protein is Ribosomal RNA small subunit methyltransferase A.